We begin with the raw amino-acid sequence, 250 residues long: Glucosamine-6-phosphate deaminase (250 aa).

D67 serves as the catalytic Proton acceptor; for enolization step. N136 acts as the For ring-opening step in catalysis. Catalysis depends on H138, which acts as the Proton acceptor; for ring-opening step. The active-site For ring-opening step is the E143.

It belongs to the glucosamine/galactosamine-6-phosphate isomerase family. NagB subfamily.

It carries out the reaction alpha-D-glucosamine 6-phosphate + H2O = beta-D-fructose 6-phosphate + NH4(+). Its pathway is amino-sugar metabolism; N-acetylneuraminate degradation; D-fructose 6-phosphate from N-acetylneuraminate: step 5/5. Functionally, catalyzes the reversible isomerization-deamination of glucosamine 6-phosphate (GlcN6P) to form fructose 6-phosphate (Fru6P) and ammonium ion. The protein is Glucosamine-6-phosphate deaminase of Oceanobacillus iheyensis (strain DSM 14371 / CIP 107618 / JCM 11309 / KCTC 3954 / HTE831).